A 228-amino-acid polypeptide reads, in one-letter code: Lipoprotein-releasing system ATP-binding protein LolD (228 aa).

An ABC transporter domain is found at 5–228 (LRCHQVCKTY…DGLLTDITGA (224 aa)). Residue 41-48 (GSSGSGKS) participates in ATP binding.

The protein belongs to the ABC transporter superfamily. Lipoprotein translocase (TC 3.A.1.125) family. In terms of assembly, the complex is composed of two ATP-binding proteins (LolD) and two transmembrane proteins (LolC and LolE).

Its subcellular location is the cell inner membrane. Part of the ABC transporter complex LolCDE involved in the translocation of mature outer membrane-directed lipoproteins, from the inner membrane to the periplasmic chaperone, LolA. Responsible for the formation of the LolA-lipoprotein complex in an ATP-dependent manner. This is Lipoprotein-releasing system ATP-binding protein LolD from Vibrio cholerae serotype O1 (strain ATCC 39315 / El Tor Inaba N16961).